We begin with the raw amino-acid sequence, 128 residues long: Ferric uptake regulation protein homolog (128 aa).

This sequence belongs to the Fur family.

This chain is Ferric uptake regulation protein homolog, found in Archaeoglobus fulgidus (strain ATCC 49558 / DSM 4304 / JCM 9628 / NBRC 100126 / VC-16).